The chain runs to 248 residues: Adenosylcobinamide-GDP ribazoletransferase (248 aa).

The next 6 helical transmembrane spans lie at 36–56 (FFLPVVASIIGGMEFLIYLGL), 59–79 (FLPPNVIIVLLLLFTAMITGG), 113–133 (FGTIAMIINLLLKYQLLYSLV), 137–157 (CSIAIILAPVIGRISILFLCL), 170–190 (IFIGNMSKPIIFLITIIALAM), and 199–219 (ITIISFTAVLIITYLFYLLCL).

It belongs to the CobS family. Mg(2+) serves as cofactor.

Its subcellular location is the cell membrane. It carries out the reaction alpha-ribazole + adenosylcob(III)inamide-GDP = adenosylcob(III)alamin + GMP + H(+). The enzyme catalyses alpha-ribazole 5'-phosphate + adenosylcob(III)inamide-GDP = adenosylcob(III)alamin 5'-phosphate + GMP + H(+). The protein operates within cofactor biosynthesis; adenosylcobalamin biosynthesis; adenosylcobalamin from cob(II)yrinate a,c-diamide: step 7/7. Its function is as follows. Joins adenosylcobinamide-GDP and alpha-ribazole to generate adenosylcobalamin (Ado-cobalamin). Also synthesizes adenosylcobalamin 5'-phosphate from adenosylcobinamide-GDP and alpha-ribazole 5'-phosphate. In Clostridium botulinum (strain 657 / Type Ba4), this protein is Adenosylcobinamide-GDP ribazoletransferase.